The sequence spans 330 residues: ADP-L-glycero-D-manno-heptose-6-epimerase (330 aa).

Residues 11–12 (FI), 32–33 (DD), Gln39, Gln54, 75–79 (QGACA), and Asn92 each bind NADP(+). Residue Tyr139 is the Proton acceptor of the active site. Lys143 contributes to the NADP(+) binding site. Substrate is bound at residue Asn168. The NADP(+) site is built by Val169 and Lys177. The Proton acceptor role is filled by Lys177. Residues Arg179, His186, 200 to 203 (FGEH), Arg213, and Tyr292 contribute to the substrate site.

Belongs to the NAD(P)-dependent epimerase/dehydratase family. HldD subfamily. In terms of assembly, homopentamer. Requires NADP(+) as cofactor.

The enzyme catalyses ADP-D-glycero-beta-D-manno-heptose = ADP-L-glycero-beta-D-manno-heptose. Its pathway is nucleotide-sugar biosynthesis; ADP-L-glycero-beta-D-manno-heptose biosynthesis; ADP-L-glycero-beta-D-manno-heptose from D-glycero-beta-D-manno-heptose 7-phosphate: step 4/4. In terms of biological role, catalyzes the interconversion between ADP-D-glycero-beta-D-manno-heptose and ADP-L-glycero-beta-D-manno-heptose via an epimerization at carbon 6 of the heptose. The chain is ADP-L-glycero-D-manno-heptose-6-epimerase from Pseudomonas aeruginosa (strain UCBPP-PA14).